The sequence spans 371 residues: Loganic acid O-methyltransferase (371 aa).

Residue Tyr31 coordinates S-adenosyl-L-homocysteine. Loganate contacts are provided by Tyr37 and Gln38. Cys78, Asn83, Asp114, His115, Ser141, and Phe142 together coordinate S-adenosyl-L-homocysteine. The loganate site is built by His162 and Trp163. Asn180 is a binding site for Mg(2+). Ala241 and His245 together coordinate loganate. Residues Asp267, Phe269, and Asn270 each coordinate Mg(2+). Loganate is bound by residues Gln273 and Gln316.

Belongs to the methyltransferase superfamily. Type-7 methyltransferase family. As to quaternary structure, homodimer. Mg(2+) serves as cofactor. Expressed in leaves (especially in leaf epidermis), flowers, siliques and stems, and, at low levels, in hairy roots.

The catalysed reaction is loganate + S-adenosyl-L-methionine = loganin + S-adenosyl-L-homocysteine. The protein operates within alkaloid biosynthesis. Strongly repressed by loganin and slightly by S-adenosyl-L-homocysteine. Component of the seco-iridoid and derivatives monoterpenoid indole alkaloids (MIAs, e.g. vinblastine and ajmalicine) biosynthesis pathway. Catalyzes the methylation of loganic acid (6S,7R) to produce loganin. Weak activity with secologanic acid as substrate. Inactive on deoxyloganic, dehydrologanic, epiloganic and loganetic acid. This chain is Loganic acid O-methyltransferase, found in Catharanthus roseus (Madagascar periwinkle).